A 427-amino-acid polypeptide reads, in one-letter code: Glutamyl-tRNA(Gln) amidotransferase subunit D (427 aa).

One can recognise an Asparaginase/glutaminase domain in the interval 74–407 (ERVYIIGAGG…EVVRKMFQRN (334 aa)). Residues Thr84, Thr160, Asp161, and Lys240 contribute to the active site.

The protein belongs to the asparaginase 1 family. GatD subfamily. In terms of assembly, heterodimer of GatD and GatE.

It carries out the reaction L-glutamyl-tRNA(Gln) + L-glutamine + ATP + H2O = L-glutaminyl-tRNA(Gln) + L-glutamate + ADP + phosphate + H(+). Functionally, allows the formation of correctly charged Gln-tRNA(Gln) through the transamidation of misacylated Glu-tRNA(Gln) in organisms which lack glutaminyl-tRNA synthetase. The reaction takes place in the presence of glutamine and ATP through an activated gamma-phospho-Glu-tRNA(Gln). The GatDE system is specific for glutamate and does not act on aspartate. The protein is Glutamyl-tRNA(Gln) amidotransferase subunit D of Aeropyrum pernix (strain ATCC 700893 / DSM 11879 / JCM 9820 / NBRC 100138 / K1).